Here is a 360-residue protein sequence, read N- to C-terminus: DNA replication and repair protein RecF (360 aa).

ATP is bound at residue 30–37; sequence GHNGSGKT.

It belongs to the RecF family.

It localises to the cytoplasm. Its function is as follows. The RecF protein is involved in DNA metabolism; it is required for DNA replication and normal SOS inducibility. RecF binds preferentially to single-stranded, linear DNA. It also seems to bind ATP. The polypeptide is DNA replication and repair protein RecF (Actinobacillus pleuropneumoniae serotype 3 (strain JL03)).